The following is a 913-amino-acid chain: Protein translocase subunit SecA (913 aa).

ATP is bound by residues glutamine 87, 105-109 (GEGKT), and aspartate 512. The interval 864–913 (LDQPEEEPAEVEGQPDVAVASVRTEPKIGRNEPCPCGSGKKYKHCHGQVQ) is disordered. 4 residues coordinate Zn(2+): cysteine 897, cysteine 899, cysteine 908, and histidine 909. Over residues 903–913 (KKYKHCHGQVQ) the composition is skewed to basic residues.

This sequence belongs to the SecA family. Monomer and homodimer. Part of the essential Sec protein translocation apparatus which comprises SecA, SecYEG and auxiliary proteins SecDF-YajC and YidC. Requires Zn(2+) as cofactor.

The protein localises to the cell inner membrane. It is found in the cytoplasm. The catalysed reaction is ATP + H2O + cellular proteinSide 1 = ADP + phosphate + cellular proteinSide 2.. Part of the Sec protein translocase complex. Interacts with the SecYEG preprotein conducting channel. Has a central role in coupling the hydrolysis of ATP to the transfer of proteins into and across the cell membrane, serving both as a receptor for the preprotein-SecB complex and as an ATP-driven molecular motor driving the stepwise translocation of polypeptide chains across the membrane. In Stutzerimonas stutzeri (strain A1501) (Pseudomonas stutzeri), this protein is Protein translocase subunit SecA.